A 277-amino-acid chain; its full sequence is MAAGRFLLRRLRASFRSPLRNALVDAPHARAMHDGGGPRRLCIEGNIAVGKSTFVKLLMKTHPEWQVATEPIAEWQNIQAAGAQKDGTSKRLGNLLEMMYQEPARWSYTFQTLSFMSRLKVQLEPIPGRLLQAEKSVRVFERSVYSDRYIFAKNLFENGSLSDIEWHIYQDWHSFLLQEFANRLLLHGFIYLQASPQVCMERLYQRDREEEKGIELAYLQQLHSQHEDWFINKTTKLHFEALQHVPVLVLDVTEDFSENAARQEELMGQVNTFMRNL.

The transit peptide at 1 to 39 directs the protein to the mitochondrion; it reads MAAGRFLLRRLRASFRSPLRNALVDAPHARAMHDGGGPR. 45–53 is a binding site for ATP; sequence GNIAVGKST. Substrate contacts are provided by Glu-70, Tyr-100, Gln-111, and Arg-118. Glu-141 functions as the Proton acceptor in the catalytic mechanism. Arg-142 and Asp-147 together coordinate substrate. An ATP-binding site is contributed by 206 to 208; sequence RDR. Glu-211 contributes to the substrate binding site. ATP is bound at residue 254-256; sequence EDF.

This sequence belongs to the DCK/DGK family. As to quaternary structure, homodimer. Spleen and thymus. Expressed at much lower levels in the brain and liver.

It is found in the mitochondrion. The protein localises to the cytoplasm. The enzyme catalyses 2'-deoxyguanosine + ATP = dGMP + ADP + H(+). It catalyses the reaction 2'-deoxyadenosine + ATP = dAMP + ADP + H(+). Phosphorylates deoxyguanosine and deoxyadenosine in the mitochondrial matrix, with the highest efficiency for deoxyguanosine. In non-replicating cells, where cytosolic dNTP synthesis is down-regulated, mtDNA synthesis depends solely on DGUOK and TK2. Phosphorylates certain nucleoside analogs. Widely used as target of antiviral and chemotherapeutic agents. The polypeptide is Deoxyguanosine kinase, mitochondrial (Dguok) (Mus musculus (Mouse)).